The primary structure comprises 383 residues: Galactokinase (383 aa).

A substrate-binding site is contributed by 34–37; it reads EHTD. Residue 124–130 participates in ATP binding; it reads GAGLSSS. Mg(2+)-binding residues include S130 and E162. D174 functions as the Proton acceptor in the catalytic mechanism. Y223 lines the substrate pocket.

The protein belongs to the GHMP kinase family. GalK subfamily.

It is found in the cytoplasm. It carries out the reaction alpha-D-galactose + ATP = alpha-D-galactose 1-phosphate + ADP + H(+). Its pathway is carbohydrate metabolism; galactose metabolism. In terms of biological role, catalyzes the transfer of the gamma-phosphate of ATP to D-galactose to form alpha-D-galactose-1-phosphate (Gal-1-P). The polypeptide is Galactokinase (Yersinia enterocolitica serotype O:8 / biotype 1B (strain NCTC 13174 / 8081)).